A 538-amino-acid polypeptide reads, in one-letter code: Carboxypeptidase 2 (538 aa).

Residues 1–21 form the signal peptide; that stretch reads MVAYRFLTLISLGLGSHCASA. Residue asparagine 46 is glycosylated (N-linked (GlcNAc...) asparagine). The interval 53–76 is disordered; that stretch reads PAFTSPGTVPRGFSDGTSGPTRDE. The region spanning 71–351 is the Peptidase M14 domain; it reads GPTRDETMEG…VMVKSILQTA (281 aa). Residues histidine 136, glutamate 139, and histidine 224 each contribute to the Zn(2+) site. The active-site Proton donor/acceptor is glutamate 322. Asparagine 393 and asparagine 459 each carry an N-linked (GlcNAc...) asparagine glycan.

It belongs to the peptidase M14 family. Zn(2+) serves as cofactor.

It is found in the secreted. Functionally, extracellular metalloprotease that contributes to pathogenicity. The chain is Carboxypeptidase 2 (MCPB) from Trichophyton tonsurans (Scalp ringworm fungus).